A 649-amino-acid chain; its full sequence is Transcription factor E2-alpha (649 aa).

Disordered regions lie at residues 34-107, 127-206, 222-267, 291-325, and 339-382; these read GKGR…SERS, LPGE…SAKT, LHPS…GLQQ, SAAP…SSSG, and DHSS…DGGL. Polar residues-rich tracts occupy residues 56–76 and 85–94; these read SSGS…SRTY and SHNSLPSSTF. Over residues 127–143 the composition is skewed to low complexity; the sequence is LPGELGLSSPGPLSPSG. 2 positions are modified to phosphoserine: serine 135 and serine 140. Residues 145-156 are compositionally biased toward polar residues; the sequence is KSGSQYYPSYPS. A Nuclear localization signal motif is present at residues 171–177; that stretch reads SKKVRKV. Low complexity-rich tracts occupy residues 182 to 193 and 242 to 259; these read PSSVYPSSSGDS and GDGS…SVGS. Positions 339-352 are enriched in low complexity; the sequence is DHSSNNFSPSPSTP. Phosphothreonine is present on threonine 351. Serine 355 is subject to Phosphoserine. Arginine 367 carries the post-translational modification Omega-N-methylarginine. The residue at position 375 (serine 375) is a Phosphoserine. The interval 385 to 420 is leucine-zipper; the sequence is LSKMEDRLDEAIHVLRSHAVGTASDLHGLLPGHGAL. The interval 431 to 547 is disordered; it reads GGRHAGLVGG…KAEREKERRV (117 aa). Residues 448–469 show a composition bias toward polar residues; that stretch reads TSGTSLLHTHASLPSQASSLPD. Residue lysine 494 forms a Glycyl lysine isopeptide (Lys-Gly) (interchain with G-Cter in SUMO2) linkage. Serine 524 bears the Phosphoserine mark. Glutamate 529 bears the Phosphothreonine mark. Residues 537-547 are compositionally biased toward basic and acidic residues; that stretch reads QKAEREKERRV. The 54-residue stretch at 544–597 folds into the bHLH domain; sequence ERRVANNARERLRVRDINEAFKELGRMCQLHLSSEKPQTKLLILHQAVAVILSL. A Glycyl lysine isopeptide (Lys-Gly) (interchain with G-Cter in SUMO2) cross-link involves residue lysine 620.

Homodimer. Heterodimer; efficient DNA binding requires dimerization with another bHLH protein. Forms a heterodimer with TWIST1 and TWIST2. Forms a heterodimer with NEUROD1; the heterodimer is inhibited in presence of ID2, but not NR0B2, to E-box element. Forms a heterodimer with TCF15; the heterodimer binds E-box element. Forms a heterodimer with MYOG; heterodimerization enhances MYOG DNA-binding and transcriptional activities. Forms a heterodimer with ATOH8; repress transcription of TCF3 and TCF3-NEUROG3 dimer-induced transactivation of E box-dependent promoters. Component of a nuclear TAL-1 complex composed at least of CBFA2T3, LDB1, TAL1 and TCF3. Interacts with NEUROD2. Interacts with EP300. Interacts with PTF1A, TGFB1I1 and UBE2I. Interacts with BHLHA9. Interacts with ASB2; the interaction is mediated by SKP2 and targets TCF3 for Notch-induced proteasomal degradation. Interacts with transcription factor ASCL5/AmeloD. As to quaternary structure, interacts with RALGAPA1. Interacts with FIGLA. In terms of assembly, forms a heterodimer with ATOH7; required for ATOH7 DNA-binding. In terms of processing, phosphorylated following NGF stimulation. Undergoes Notch-induced ubiquitination and subsequent proteasomal degradation which is mediated by ASB1 or ASB2, the substrate-recognition components of probable ECS E3 ubiquitin-protein ligase complexes.

The protein localises to the nucleus. Functionally, transcriptional regulator. Involved in the initiation of neuronal differentiation and mesenchymal to epithelial transition. Heterodimers between TCF3 and tissue-specific basic helix-loop-helix (bHLH) proteins play major roles in determining tissue-specific cell fate during embryogenesis, like muscle or early B-cell differentiation. Together with TCF15, required for the mesenchymal to epithelial transition. Dimers bind DNA on E-box motifs: 5'-CANNTG-3'. Binds to the kappa-E2 site in the kappa immunoglobulin gene enhancer. Binds to IEB1 and IEB2, which are short DNA sequences in the insulin gene transcription control region. Facilitates ATOH7 binding to DNA at the consensus sequence 5'-CAGGTG-3', and positively regulates transcriptional activity. In Mesocricetus auratus (Golden hamster), this protein is Transcription factor E2-alpha (TCF3).